The following is a 412-amino-acid chain: Acetate kinase (412 aa).

Asn10 provides a ligand contact to Mg(2+). Residue Lys17 participates in ATP binding. The disordered stretch occupies residues 40 to 61; it reads ETSRLAHTPSAGGGAEPRERTG. Arg95 provides a ligand contact to substrate. Asp152 functions as the Proton donor/acceptor in the catalytic mechanism. ATP is bound by residues 212 to 216, 286 to 288, and 334 to 338; these read HLGNG, DMR, and GVGEN. Glu388 is a binding site for Mg(2+).

The protein belongs to the acetokinase family. In terms of assembly, homodimer. Mg(2+) is required as a cofactor. Requires Mn(2+) as cofactor.

The protein localises to the cytoplasm. It catalyses the reaction acetate + ATP = acetyl phosphate + ADP. Its pathway is metabolic intermediate biosynthesis; acetyl-CoA biosynthesis; acetyl-CoA from acetate: step 1/2. In terms of biological role, catalyzes the formation of acetyl phosphate from acetate and ATP. Can also catalyze the reverse reaction. This chain is Acetate kinase, found in Streptomyces griseus subsp. griseus (strain JCM 4626 / CBS 651.72 / NBRC 13350 / KCC S-0626 / ISP 5235).